The chain runs to 689 residues: Methionine--tRNA ligase (689 aa).

The short motif at 15–25 is the 'HIGH' region element; it reads PYANGPVHIGH. The Zn(2+) site is built by Cys-147, Cys-150, Cys-160, and Cys-163. A 'KMSKS' region motif is present at residues 342-346; sequence KISTS. Thr-345 contributes to the ATP binding site. In terms of domain architecture, tRNA-binding spans 588–689; the sequence is DFAKMDIRVA…AVVNAGSMIG (102 aa).

The protein belongs to the class-I aminoacyl-tRNA synthetase family. MetG type 1 subfamily. In terms of assembly, homodimer. Requires Zn(2+) as cofactor.

The protein localises to the cytoplasm. It catalyses the reaction tRNA(Met) + L-methionine + ATP = L-methionyl-tRNA(Met) + AMP + diphosphate. In terms of biological role, is required not only for elongation of protein synthesis but also for the initiation of all mRNA translation through initiator tRNA(fMet) aminoacylation. The protein is Methionine--tRNA ligase of Cytophaga hutchinsonii (strain ATCC 33406 / DSM 1761 / CIP 103989 / NBRC 15051 / NCIMB 9469 / D465).